The chain runs to 344 residues: Protein POLAR LOCALIZATION DURING ASYMMETRIC DIVISION AND REDISTRIBUTION (344 aa).

The residue at position 19 (threonine 19) is a Phosphothreonine; by ASK7. Residue serine 79 is modified to Phosphoserine; by ASK7. Threonine 84 and threonine 86 each carry phosphothreonine; by ASK7. Residues serine 91 and serine 94 each carry the phosphoserine; by ASK7 modification. Threonine 193, threonine 217, and threonine 233 each carry phosphothreonine; by ASK7. Residue serine 235 is modified to Phosphoserine; by ASK7. The stretch at 262–297 forms a coiled coil; sequence LETRQQEELVKLETALNRVERRLQEKETEVSWWKDA. Serine 308, serine 309, serine 320, serine 321, and serine 336 each carry phosphoserine; by ASK7.

As to quaternary structure, component of a complex made of POLAR, BASL, ASK7/BIN2 and ASK3/SK12. Interacts with BASL, ASK7/BIN2 and ASK3/SK12. In terms of processing, phosphorylation by ASK7/BIN2 is increases turnover. Expressed in stomatal lineage cells with asymmetric division potential.

The protein resides in the cytoplasm. Its subcellular location is the cell cortex. Functionally, regulates asymmetric cell division (ACD), especially in stomatal-lineage cells. Acts as a stomatal lineage scaffold which regulates subcellular localization and transient polarization of kinases (e.g. ASK7/BIN2 and ASK3/SK12) involved in ACD in a BASL-dependent manner. Promotes the differentiation of both pavement cells and stomata. The chain is Protein POLAR LOCALIZATION DURING ASYMMETRIC DIVISION AND REDISTRIBUTION from Arabidopsis thaliana (Mouse-ear cress).